Reading from the N-terminus, the 1080-residue chain is Ubiquitin-activating enzyme E1 1 (1080 aa).

The span at 1-14 shows a compositional bias: basic and acidic residues; that stretch reads MLHKRASEANDKND. 2 disordered regions span residues 1 to 20 and 29 to 50; these read MLHKRASEANDKNDNTIIGS and RIDFTESSSDKSSSILASGSSR. Low complexity predominate over residues 38 to 49; the sequence is DKSSSILASGSS. ATP contacts are provided by residues Ala502, Asp528, Arg539, Lys552, and 600–601; that span reads DN. Cys656 serves as the catalytic Glycyl thioester intermediate.

The protein belongs to the ubiquitin-activating E1 family. Monomer. In terms of tissue distribution, expressed in leaves, flowers, roots and stems. Detected in germinating seeds, cotyledons, hypocotyls, vascular tissues, anthers, filaments, pollen, style, stigma, sepals, petals, ovary, developing ovules, funiculi and silique walls.

The enzyme catalyses ATP + ubiquitin + [E1 ubiquitin-activating enzyme]-L-cysteine = AMP + diphosphate + S-ubiquitinyl-[E1 ubiquitin-activating enzyme]-L-cysteine.. The protein operates within protein modification; protein ubiquitination. Activates ubiquitin by first adenylating its C-terminal glycine residue with ATP, and thereafter linking this residue to the side chain of a cysteine residue in E1, yielding a ubiquitin-E1 thioester and free AMP. The polypeptide is Ubiquitin-activating enzyme E1 1 (UBA1) (Arabidopsis thaliana (Mouse-ear cress)).